Reading from the N-terminus, the 46-residue chain is Iota-conotoxin-like R11.7 (46 aa).

Pro-2 and Pro-11 each carry 4-hydroxyproline. 4 disulfides stabilise this stretch: Cys-5/Cys-19, Cys-12/Cys-22, Cys-18/Cys-27, and Cys-21/Cys-38. Pro-29 carries the post-translational modification 4-hydroxyproline. The residue at position 44 (Phe-44) is a D-phenylalanine.

Belongs to the conotoxin I1 superfamily. Expressed by the venom duct.

It localises to the secreted. In terms of biological role, iota-conotoxins bind to voltage-gated sodium channels (Nav) and act as agonists by shifting the voltage-dependence of activation to more hyperpolarized levels. Produces general excitatory symptoms. This is Iota-conotoxin-like R11.7 from Conus radiatus (Rayed cone).